The following is a 593-amino-acid chain: UvrABC system protein C (593 aa).

Positions 14 to 91 (DKPGCYLMKN…IKEHDPRYNV (78 aa)) constitute a GIY-YIG domain. One can recognise a UVR domain in the interval 196–231 (EEMKQTLTEKMLQAAENMEFERAKEYRDQIKSIEAV).

This sequence belongs to the UvrC family. As to quaternary structure, interacts with UvrB in an incision complex.

The protein resides in the cytoplasm. The UvrABC repair system catalyzes the recognition and processing of DNA lesions. UvrC both incises the 5' and 3' sides of the lesion. The N-terminal half is responsible for the 3' incision and the C-terminal half is responsible for the 5' incision. The polypeptide is UvrABC system protein C (Brevibacillus brevis (strain 47 / JCM 6285 / NBRC 100599)).